A 283-amino-acid polypeptide reads, in one-letter code: Urease accessory protein UreD 1 (283 aa).

This sequence belongs to the UreD family. In terms of assembly, ureD, UreF and UreG form a complex that acts as a GTP-hydrolysis-dependent molecular chaperone, activating the urease apoprotein by helping to assemble the nickel containing metallocenter of UreC. The UreE protein probably delivers the nickel.

It localises to the cytoplasm. In terms of biological role, required for maturation of urease via the functional incorporation of the urease nickel metallocenter. This is Urease accessory protein UreD 1 from Brucella anthropi (strain ATCC 49188 / DSM 6882 / CCUG 24695 / JCM 21032 / LMG 3331 / NBRC 15819 / NCTC 12168 / Alc 37) (Ochrobactrum anthropi).